Consider the following 215-residue polypeptide: Outer-membrane lipoprotein carrier protein (215 aa).

Residues 1–24 (MFVLKARHLMAAGLVSLAAWSAGA) form the signal peptide.

The protein belongs to the LolA family. In terms of assembly, monomer.

It localises to the periplasm. In terms of biological role, participates in the translocation of lipoproteins from the inner membrane to the outer membrane. Only forms a complex with a lipoprotein if the residue after the N-terminal Cys is not an aspartate (The Asp acts as a targeting signal to indicate that the lipoprotein should stay in the inner membrane). This Ralstonia nicotianae (strain ATCC BAA-1114 / GMI1000) (Ralstonia solanacearum) protein is Outer-membrane lipoprotein carrier protein.